The chain runs to 701 residues: Polyribonucleotide nucleotidyltransferase (701 aa).

Asp-487 and Asp-493 together coordinate Mg(2+). The region spanning 553-612 (PRLYTLRINPDKIRDVIGKGGSVIRALTEETGTSIDIAEDGLITIASVSAEGAEEAKRRI) is the KH domain. One can recognise an S1 motif domain in the interval 622-692 (GKIYEGTVVK…ERGRIRLSIK (71 aa)).

This sequence belongs to the polyribonucleotide nucleotidyltransferase family. Mg(2+) is required as a cofactor.

It is found in the cytoplasm. It carries out the reaction RNA(n+1) + phosphate = RNA(n) + a ribonucleoside 5'-diphosphate. Its function is as follows. Involved in mRNA degradation. Catalyzes the phosphorolysis of single-stranded polyribonucleotides processively in the 3'- to 5'-direction. This is Polyribonucleotide nucleotidyltransferase from Laribacter hongkongensis (strain HLHK9).